The chain runs to 743 residues: Threonine synthase-like 1 (743 aa).

Lysine 281 is modified (N6-acetyllysine). Position 351 is an N6-(pyridoxal phosphate)lysine (lysine 351).

Belongs to the threonine synthase family. Pyridoxal 5'-phosphate serves as cofactor.

This Pongo abelii (Sumatran orangutan) protein is Threonine synthase-like 1 (THNSL1).